The sequence spans 465 residues: Ribulose bisphosphate carboxylase large chain (465 aa).

Position 4 is an N6,N6,N6-trimethyllysine (Lys4). Position 163 (Thr163) interacts with substrate. Catalysis depends on Lys165, which acts as the Proton acceptor. A substrate-binding site is contributed by Lys167. Positions 191, 193, and 194 each coordinate Mg(2+). Lys191 carries the post-translational modification N6-carboxylysine. The active-site Proton acceptor is the His284. Substrate contacts are provided by Arg285, His317, and Ser369.

This sequence belongs to the RuBisCO large chain family. Type I subfamily. In terms of assembly, heterohexadecamer of 8 large chains and 8 small chains; disulfide-linked. The disulfide link is formed within the large subunit homodimers. Mg(2+) is required as a cofactor. The disulfide bond which can form in the large chain dimeric partners within the hexadecamer appears to be associated with oxidative stress and protein turnover.

It is found in the plastid. The protein localises to the chloroplast. The enzyme catalyses 2 (2R)-3-phosphoglycerate + 2 H(+) = D-ribulose 1,5-bisphosphate + CO2 + H2O. The catalysed reaction is D-ribulose 1,5-bisphosphate + O2 = 2-phosphoglycolate + (2R)-3-phosphoglycerate + 2 H(+). Functionally, ruBisCO catalyzes two reactions: the carboxylation of D-ribulose 1,5-bisphosphate, the primary event in carbon dioxide fixation, as well as the oxidative fragmentation of the pentose substrate in the photorespiration process. Both reactions occur simultaneously and in competition at the same active site. The polypeptide is Ribulose bisphosphate carboxylase large chain (Trochodendron aralioides (Wheel tree)).